A 424-amino-acid polypeptide reads, in one-letter code: G1/S-specific cyclin-E (424 aa).

Residues 1–25 (MSRRSGRLQSRQDNQPLTECISDEN) are disordered. Residues 7–17 (RLQSRQDNQPL) show a composition bias toward polar residues. Position 411 is a phosphothreonine (T411).

Belongs to the cyclin family. Cyclin E subfamily. In terms of assembly, interacts with a member of the CDK2/CDK protein kinases to form a serine/threonine kinase holoenzyme complex. The cyclin subunit imparts substrate specificity to the complex.

The protein resides in the nucleus. Functionally, essential for the control of the cell cycle at the G1/S (start) transition. The chain is G1/S-specific cyclin-E (CYCE) from Hemicentrotus pulcherrimus (Sea urchin).